The sequence spans 584 residues: Pentatricopeptide repeat-containing protein At2g01510, mitochondrial (584 aa).

Residues 1 to 20 (MLAKQTPLTKQMLSELLRAS) constitute a mitochondrion transit peptide. PPR repeat units follow at residues 73–107 (RIFL…GVRP), 108–142 (DEFT…GFGC), 143–173 (LGIV…MQVK), 174–208 (DLVA…AVQF), 209–243 (DSFT…EIDC), 244–274 (NIIV…MKQR), 275–309 (NVVS…GLRP), 310–344 (NYVT…NDKN), and 348–378 (RKEH…MPVE). A type E motif region spans residues 383–458 (IWGALLGACA…VAAYSSVEFE (76 aa)). Residues 459–489 (GKIHFFNRGDKSHPQSKAIYEKLDEILKKIR) are type E(+) motif. A type DYW motif region spans residues 490-584 (KMGYVPDTCS…NGVCSCKEFW (95 aa)).

Belongs to the PPR family. PCMP-H subfamily.

The protein resides in the mitochondrion. This chain is Pentatricopeptide repeat-containing protein At2g01510, mitochondrial (PCMP-H37), found in Arabidopsis thaliana (Mouse-ear cress).